Reading from the N-terminus, the 305-residue chain is Dihydroorotate dehydrogenase B (NAD(+)), catalytic subunit (305 aa).

FMN-binding positions include S23 and 47 to 48; that span reads KG. Residues K47 and 71–75 contribute to the substrate site; that span reads NAIGL. N101 and N129 together coordinate FMN. N129 is a binding site for substrate. The active-site Nucleophile is the C132. Residues K167 and I193 each coordinate FMN. Position 194–195 (194–195) interacts with substrate; it reads NT. Residues G219, 245-246, and 267-268 contribute to the FMN site; these read GG and GT.

This sequence belongs to the dihydroorotate dehydrogenase family. Type 1 subfamily. Heterotetramer of 2 PyrK and 2 PyrD type B subunits. Requires FMN as cofactor.

Its subcellular location is the cytoplasm. The enzyme catalyses (S)-dihydroorotate + NAD(+) = orotate + NADH + H(+). It participates in pyrimidine metabolism; UMP biosynthesis via de novo pathway; orotate from (S)-dihydroorotate (NAD(+) route): step 1/1. Functionally, catalyzes the conversion of dihydroorotate to orotate with NAD(+) as electron acceptor. The polypeptide is Dihydroorotate dehydrogenase B (NAD(+)), catalytic subunit (pyrD) (Geotalea uraniireducens (strain Rf4) (Geobacter uraniireducens)).